A 70-amino-acid chain; its full sequence is Beta-defensin 131B (70 aa).

A signal peptide spans 1 to 22 (MRVLFFVFGVLSLMSTVPPTRS). Cystine bridges form between C29–C56, C36–C50, and C40–C57.

Belongs to the beta-defensin family.

The protein localises to the secreted. Functionally, has antibacterial activity. The polypeptide is Beta-defensin 131B (Homo sapiens (Human)).